An 802-amino-acid chain; its full sequence is MAARLRPLALRLLARTFPLVARGFSDETLEKAAKSEGYCSRILRAQGTRREGYNEFSLRVEGDPEFYKPGNSYRVTLSAATPAYFRGFTLIALKEGKEGDKEEDHAGTFQIIDEEETQFMSNCPVAVTESTPRRRTRIQVFWTAPPTGTGCVILKASIVQKRIIYFQDEGSLTKRICEQDSASEGVTDKPTLDCCACGTAKYRLTFYGNWSEKTHPKDFPRRTNHWSAIIGSSHSKNYILWEYGGYASEGVKQVAELGSPVKMEEEIRQQSDEVLTVIKAKAQWPAWQPLNVRAAPSAEFSVDRHRHLMSFLTMLGPSPDWNVGLSAEDLCTKDCGWVQKVVQDLIPWDAGTDSGVTYESPNKPTVPQEKIRPLTSLDHPQSPFYDPEGGSIKLVARVVLERIARKGEQCNFVPDNIDDIVADLAPEEKEEDDTPETCIYSNWSPWSACSSSTCEKGKRMRQRMLKAQLDLSVPCPDTQDFQPCMGPGCSDEDGSTCMMSDWITWSPCSVSCGMGTRSRERYVKQFPEDGSMCKVPTEETEKCIVNEECSPSSCLVTEWGEWDECSASCGTGMKRRHRMIKMTPADGSMCKAETTEAEKCMMPECHTIPCLLSPWSEWSDCSVTCGKGMRTRQRMLKSAAELGDCNEELEQAEKCMLPECPIDCELTEWSQWSECNTSCGKGHMIRTRMIKIEPQFGGTACPETVQRTKCRVRKCLRGPGMEKRRWKEAREKRRSEQAKKNIDNEQYPVCRLKPWTAWTECSTLCGGGIQERYMMVKKRSKSTQFTSCKDKKELRACNVHPC.

Residues 1 to 23 form the signal peptide; that stretch reads MAARLRPLALRLLARTFPLVARG. The Reelin domain maps to 24-189; the sequence is FSDETLEKAA…DSASEGVTDK (166 aa). 17 disulfide bridges follow: Cys39-Cys123, Cys151-Cys177, Cys194-Cys331, Cys195-Cys335, Cys197-Cys410, Cys438-Cys475, Cys449-Cys484, Cys454-Cys489, Cys497-Cys533, Cys508-Cys512, Cys543-Cys549, Cys554-Cys590, Cys565-Cys569, Cys600-Cys605, Cys610-Cys645, Cys621-Cys625, and Cys655-Cys660. In terms of domain architecture, Spondin spans 190–383; that stretch reads PTLDCCACGT…LTSLDHPQSP (194 aa). The N-linked (GlcNAc...) asparagine glycan is linked to Asn209. Ca(2+)-binding residues include Asp320, Asp349, and Asp353. TSP type-1 domains follow at residues 437–490, 496–550, 553–606, 609–661, 663–716, and 749–801; these read TCIY…PGCS, TCMM…EECS, SCLV…PECH, PCLL…PECP, DCEL…RKCL, and VCRL…NVHP. Asn676 is a glycosylation site (N-linked (GlcNAc...) asparagine).

Its subcellular location is the secreted. It is found in the extracellular space. The protein resides in the extracellular matrix. Functionally, cell adhesion protein that promotes the attachment of spinal cord and sensory neuron cells and the outgrowth of neurites in vitro. May contribute to the growth and guidance of axons in both the spinal cord and the PNS. Somite-derived spondin 1 is an inhibitory signal involved in patterning the segmental migration of neural crest cells and their topographical segregation within the rostral somites in vitro. May be required to prevent the lateral drifting of the commissural axons after having crossed the floor plate. This Gallus gallus (Chicken) protein is Spondin-1 (SPON1).